The primary structure comprises 156 residues: 6,7-dimethyl-8-ribityllumazine synthase (156 aa).

Residues phenylalanine 22, alanine 57–glutamate 59, and threonine 81–isoleucine 83 contribute to the 5-amino-6-(D-ribitylamino)uracil site. Position 86-87 (glycine 86–threonine 87) interacts with (2S)-2-hydroxy-3-oxobutyl phosphate. Residue histidine 89 is the Proton donor of the active site. Phenylalanine 114 serves as a coordination point for 5-amino-6-(D-ribitylamino)uracil. Arginine 128 contacts (2S)-2-hydroxy-3-oxobutyl phosphate.

Belongs to the DMRL synthase family. As to quaternary structure, forms an icosahedral capsid composed of 60 subunits, arranged as a dodecamer of pentamers.

It catalyses the reaction (2S)-2-hydroxy-3-oxobutyl phosphate + 5-amino-6-(D-ribitylamino)uracil = 6,7-dimethyl-8-(1-D-ribityl)lumazine + phosphate + 2 H2O + H(+). It functions in the pathway cofactor biosynthesis; riboflavin biosynthesis; riboflavin from 2-hydroxy-3-oxobutyl phosphate and 5-amino-6-(D-ribitylamino)uracil: step 1/2. In terms of biological role, catalyzes the formation of 6,7-dimethyl-8-ribityllumazine by condensation of 5-amino-6-(D-ribitylamino)uracil with 3,4-dihydroxy-2-butanone 4-phosphate. This is the penultimate step in the biosynthesis of riboflavin. This chain is 6,7-dimethyl-8-ribityllumazine synthase, found in Mannheimia succiniciproducens (strain KCTC 0769BP / MBEL55E).